We begin with the raw amino-acid sequence, 219 residues long: GPI ethanolamine phosphate transferase, stabilizing subunit (219 aa).

A run of 6 helical transmembrane segments spans residues Y11–L31, T42–V62, Y86–I106, F113–P133, L155–L175, and T189–W209.

It belongs to the PIGF family. In terms of assembly, part of the ethanolamine phosphate transferase 3 complex composed by PIGO and PIGF. Part of the ethanolamine phosphate transferase 2 complex with PIGG. PIGF is required to stabilize PIGG and PIGO.

The protein resides in the endoplasmic reticulum membrane. It functions in the pathway glycolipid biosynthesis; glycosylphosphatidylinositol-anchor biosynthesis. Its function is as follows. Stabilizing subunit of the ethanolamine phosphate transferase 3 and ethanolamine phosphate transferase 2 complexes that sequentially transfer an ethanolamine phosphate (EtNP) from a phosphatidylethanolamine (PE) to the 6-OH position of the third alpha-1,2-linked mannose and the second alpha-1,6-linked mannose of the alpha-D-Man-(1-&gt;2)-alpha-D-Man-(1-&gt;6)-2-PEtn-alpha-D-Man-(1-&gt;4)-alpha-D-GlcN-(1-&gt;6)-(1-radyl,2-acyl-sn-glycero-3-phospho)-2-acyl-inositol (also termed H6) intermediate to generate a 6-PEtn-alpha-D-Man-(1-&gt;2)-6-PEtn-alpha-D-Man-(1-&gt;6)-2-PEtn-alpha-D-Man-(1-&gt;4)-alpha-D-GlcN-(1-&gt;6)-(1-radyl,2-acyl-sn-glycero-3-phospho)-2-acyl-inositol (also termed H8). Participates in the tenth and eleventh steps of the glycosylphosphatidylinositol-anchor biosynthesis, in association with PIGO and PIGG, respectively. The protein is GPI ethanolamine phosphate transferase, stabilizing subunit of Homo sapiens (Human).